The following is a 150-amino-acid chain: Deoxyuridine 5'-triphosphate nucleotidohydrolase (150 aa).

Substrate-binding positions include Arg70–Gly72, Asn83, and Thr87–Asp89.

This sequence belongs to the dUTPase family. It depends on Mg(2+) as a cofactor.

It catalyses the reaction dUTP + H2O = dUMP + diphosphate + H(+). The protein operates within pyrimidine metabolism; dUMP biosynthesis; dUMP from dCTP (dUTP route): step 2/2. In terms of biological role, this enzyme is involved in nucleotide metabolism: it produces dUMP, the immediate precursor of thymidine nucleotides and it decreases the intracellular concentration of dUTP so that uracil cannot be incorporated into DNA. The chain is Deoxyuridine 5'-triphosphate nucleotidohydrolase from Desulfotalea psychrophila (strain LSv54 / DSM 12343).